A 213-amino-acid chain; its full sequence is MELNVMDHPLVSHKLTLLRSVDTPSPVFRQLVEELVTLMAYEGTREVRIEPTTVTTPLTATEGVALTRPKPLVVPILRAGLGMLEGMMRLIPSAEVGFVGMARDEETLQPMTYAERLPKDLSGRQCYVLDPMLATGGSLGGTVEFLVRRGADHITCLCILAAPEGIENFRKLVRDLDVPCHLIVAGLDDHLDEHGYIVPGLGDAGDRLYGLAE.

Residues Arg78, Arg103, and 130-138 contribute to the 5-phospho-alpha-D-ribose 1-diphosphate site; that span reads DPMLATGGS. Uracil is bound by residues Ile197 and 202 to 204; that span reads GDA. Asp203 contacts 5-phospho-alpha-D-ribose 1-diphosphate.

The protein belongs to the UPRTase family. The cofactor is Mg(2+).

It carries out the reaction UMP + diphosphate = 5-phospho-alpha-D-ribose 1-diphosphate + uracil. It participates in pyrimidine metabolism; UMP biosynthesis via salvage pathway; UMP from uracil: step 1/1. Its activity is regulated as follows. Allosterically activated by GTP. In terms of biological role, catalyzes the conversion of uracil and 5-phospho-alpha-D-ribose 1-diphosphate (PRPP) to UMP and diphosphate. In Cutibacterium acnes (strain DSM 16379 / KPA171202) (Propionibacterium acnes), this protein is Uracil phosphoribosyltransferase.